The sequence spans 114 residues: Large ribosomal subunit protein uL22 (114 aa).

The protein belongs to the universal ribosomal protein uL22 family. Part of the 50S ribosomal subunit.

Its function is as follows. This protein binds specifically to 23S rRNA; its binding is stimulated by other ribosomal proteins, e.g. L4, L17, and L20. It is important during the early stages of 50S assembly. It makes multiple contacts with different domains of the 23S rRNA in the assembled 50S subunit and ribosome. In terms of biological role, the globular domain of the protein is located near the polypeptide exit tunnel on the outside of the subunit, while an extended beta-hairpin is found that lines the wall of the exit tunnel in the center of the 70S ribosome. The protein is Large ribosomal subunit protein uL22 of Desulfosudis oleivorans (strain DSM 6200 / JCM 39069 / Hxd3) (Desulfococcus oleovorans).